We begin with the raw amino-acid sequence, 90 residues long: UPF0298 protein RBAM_014860 (90 aa).

This sequence belongs to the UPF0298 family.

The protein localises to the cytoplasm. The polypeptide is UPF0298 protein RBAM_014860 (Bacillus velezensis (strain DSM 23117 / BGSC 10A6 / LMG 26770 / FZB42) (Bacillus amyloliquefaciens subsp. plantarum)).